Here is a 268-residue protein sequence, read N- to C-terminus: NADPH-dependent 7-cyano-7-deazaguanine reductase (268 aa).

Substrate is bound at residue 79-81 (VES). An NADPH-binding site is contributed by 81-82 (SK). The Thioimide intermediate role is filled by C176. Residue D183 is the Proton donor of the active site. 215-216 (HE) provides a ligand contact to substrate. 244-245 (RG) provides a ligand contact to NADPH.

The protein belongs to the GTP cyclohydrolase I family. QueF type 2 subfamily. Homodimer.

It is found in the cytoplasm. The enzyme catalyses 7-aminomethyl-7-carbaguanine + 2 NADP(+) = 7-cyano-7-deazaguanine + 2 NADPH + 3 H(+). It functions in the pathway tRNA modification; tRNA-queuosine biosynthesis. Catalyzes the NADPH-dependent reduction of 7-cyano-7-deazaguanine (preQ0) to 7-aminomethyl-7-deazaguanine (preQ1). The protein is NADPH-dependent 7-cyano-7-deazaguanine reductase of Saccharophagus degradans (strain 2-40 / ATCC 43961 / DSM 17024).